A 496-amino-acid polypeptide reads, in one-letter code: Autophagy-related protein 21 (496 aa).

A disordered region spans residues 41-86 (SKKKTSNNNGSASNSESRNNEESILITNGSRDRTDAEEEEDNEDNA). A compositionally biased stretch (low complexity) spans 46–57 (SNNNGSASNSES). Positions 75–84 (DAEEEEDNED) are enriched in acidic residues. Thr213 bears the Phosphothreonine mark. Ser237 is subject to Phosphoserine. WD repeat units follow at residues 294-334 (VHKG…DYMS), 346-385 (TRLC…NSLP), and 448-488 (VNES…GECV). Residues 342–346 (FRRGT) carry the L/FRRG motif motif.

Belongs to the WD repeat PROPPIN family.

The protein resides in the cytoplasm. Its subcellular location is the vacuole. Its function is as follows. Required for cytoplasm to vacuole transport (Cvt) vesicles formation and mitophagy. Involved in binding of phosphatidylethanolamine to ATG8 and in recruitment of ATG8 and ATG5 to the pre-autophagosomal structure. Protects ATG8 from ARG4-mediated cleavage. Essential for maturation of proaminopeptidase I. This is Autophagy-related protein 21 (ATG21) from Saccharomyces cerevisiae (strain ATCC 204508 / S288c) (Baker's yeast).